Here is a 192-residue protein sequence, read N- to C-terminus: Elongation factor P (192 aa).

It belongs to the elongation factor P family.

It is found in the cytoplasm. It functions in the pathway protein biosynthesis; polypeptide chain elongation. In terms of biological role, involved in peptide bond synthesis. Stimulates efficient translation and peptide-bond synthesis on native or reconstituted 70S ribosomes in vitro. Probably functions indirectly by altering the affinity of the ribosome for aminoacyl-tRNA, thus increasing their reactivity as acceptors for peptidyl transferase. The protein is Elongation factor P of Borreliella afzelii (strain PKo) (Borrelia afzelii).